The primary structure comprises 911 residues: Nitrate reductase [NADH] (911 aa).

Positions 1-10 are enriched in polar residues; sequence MAASVENRQY. The segment at 1–71 is disordered; the sequence is MAASVENRQY…SEDEDDDDEK (71 aa). Acidic residues predominate over residues 61–71; sequence SSEDEDDDDEK. A Mo-molybdopterin-binding site is contributed by cysteine 188. The region spanning 536–611 is the Cytochrome b5 heme-binding domain; that stretch reads SKMYSMSEVR…LEDFRIGELI (76 aa). Histidine 571 and histidine 594 together coordinate heme. In terms of domain architecture, FAD-binding FR-type spans 654–766; it reads REKIPCKLVD…KGPLGHIEYQ (113 aa). FAD-binding positions include 706 to 709, 723 to 727, phenylalanine 728, phenylalanine 735, 740 to 742, and threonine 793; these read RAYT, VVKIY, and QMS.

Belongs to the nitrate reductase family. Homodimer. FAD serves as cofactor. The cofactor is heme. It depends on Mo-molybdopterin as a cofactor.

It catalyses the reaction nitrite + NAD(+) + H2O = nitrate + NADH + H(+). Functionally, nitrate reductase is a key enzyme involved in the first step of nitrate assimilation in plants, fungi and bacteria. This chain is Nitrate reductase [NADH] (NIA), found in Solanum lycopersicum (Tomato).